A 520-amino-acid chain; its full sequence is Legumin A2 (520 aa).

The N-terminal stretch at 1–22 (MATKLLALSLSFCFLLLGGCFA) is a signal peptide. Disulfide bonds link C32–C65 and C108–C342. Residues 37–233 (LNALEPDNRI…AFNVNRHIVD (197 aa)) enclose the Cupin type-1 1 domain. A disordered region spans residues 250 to 339 (VKGGLSIISP…RRQGDNGLEE (90 aa)). Residues 348-497 (LNIGPSSSPD…TFNLQRNEAR (150 aa)) form the Cupin type-1 2 domain.

This sequence belongs to the 11S seed storage protein (globulins) family. In terms of assembly, hexamer; each subunit is composed of an acidic and a basic chain derived from a single precursor and linked by a disulfide bond.

In terms of biological role, this protein found in the seeds of many leguminous and non-leguminous plants is the source of sulfur-containing amino acids in seed meals. The sequence is that of Legumin A2 (LEGA2) from Pisum sativum (Garden pea).